We begin with the raw amino-acid sequence, 220 residues long: V-set and transmembrane domain-containing protein 2-like protein (220 aa).

The N-terminal stretch at 1-24 (MGAPLAAALGALHYLALFLQLGGA) is a signal peptide. Residues 41-158 (ALFTETPHDM…DGGRGVPRVL (118 aa)) enclose the Ig-like domain. An intrachain disulfide couples C62 to C142. The span at 165–180 (PAPPRAPRPRGQPPGE) shows a compositional bias: pro residues. Positions 165–220 (PAPPRAPRPRGQPPGEEPGRGPTLLFLIILPGTGSGTPREAEPHQPHAGGCPARQS) are disordered.

The sequence is that of V-set and transmembrane domain-containing protein 2-like protein (Vstm2l) from Mus musculus (Mouse).